The sequence spans 141 residues: Large ribosomal subunit protein uL16 (141 aa).

This sequence belongs to the universal ribosomal protein uL16 family. As to quaternary structure, part of the 50S ribosomal subunit.

Functionally, binds 23S rRNA and is also seen to make contacts with the A and possibly P site tRNAs. The polypeptide is Large ribosomal subunit protein uL16 (Geobacillus kaustophilus (strain HTA426)).